The primary structure comprises 185 residues: Ribosome-recycling factor (185 aa).

Belongs to the RRF family.

Its subcellular location is the cytoplasm. Functionally, responsible for the release of ribosomes from messenger RNA at the termination of protein biosynthesis. May increase the efficiency of translation by recycling ribosomes from one round of translation to another. This Streptococcus thermophilus (strain CNRZ 1066) protein is Ribosome-recycling factor.